The following is a 561-amino-acid chain: Liver carboxylesterase 1F (561 aa).

A signal peptide spans 1–18; it reads MCLSFLFLVSLATCVVYG. N-linked (GlcNAc...) asparagine glycosylation is present at Asn-79. A disulfide bond links Cys-87 and Cys-116. Ser-221 (acyl-ester intermediate) is an active-site residue. Cys-273 and Cys-284 are joined by a disulfide. Residues Glu-353 and His-466 each act as charge relay system in the active site. The Prevents secretion from ER signature appears at 558–561; the sequence is HNEL.

This sequence belongs to the type-B carboxylesterase/lipase family. As to expression, expressed in liver and kidney.

It is found in the lipid droplet. The protein resides in the cytoplasm. The protein localises to the cytosol. Its subcellular location is the endoplasmic reticulum. It localises to the microsome. The enzyme catalyses a carboxylic ester + H2O = an alcohol + a carboxylate + H(+). The catalysed reaction is all-trans-retinyl hexadecanoate + H2O = all-trans-retinol + hexadecanoate + H(+). Involved in the detoxification of xenobiotics and in the activation of ester and amide prodrugs. Hydrolyzes retinyl esters. Hydrolyzes p-nitrophenyl butyrate (PNPB), triacylglycerol and monoacylglycerol. Shows higher activity against PNPB, a short-chain fatty acid ester, than against triolein, a long-chain fatty acid ester. Shows no detectable activity against diacylglycerol, cholesterol ester or phospholipids. May play a role in adipocyte lipolysis. This is Liver carboxylesterase 1F from Rattus norvegicus (Rat).